We begin with the raw amino-acid sequence, 345 residues long: OVARIAN TUMOR DOMAIN-containing deubiquitinating enzyme 9 (345 aa).

Residues 204–328 (LVENKIEGDG…EVHYNSIYPE (125 aa)) form the OTU domain. The active site involves Asp212. Catalysis depends on Cys215, which acts as the Nucleophile. The active site involves His321.

The protein belongs to the peptidase C85 family.

It carries out the reaction Thiol-dependent hydrolysis of ester, thioester, amide, peptide and isopeptide bonds formed by the C-terminal Gly of ubiquitin (a 76-residue protein attached to proteins as an intracellular targeting signal).. Its function is as follows. Hydrolase that can remove conjugated ubiquitin from proteins in vitro and may therefore play an important regulatory role at the level of protein turnover by preventing degradation. Cysteine protease with a preference for 'Lys-63' and 'Lys-48' -linked ubiquitin (UB) tetramers as substrates. Also cleaves RUB-GST fusion. The sequence is that of OVARIAN TUMOR DOMAIN-containing deubiquitinating enzyme 9 from Arabidopsis thaliana (Mouse-ear cress).